Here is a 355-residue protein sequence, read N- to C-terminus: Protein RecA (355 aa).

67-74 is a binding site for ATP; that stretch reads GPESSGKT. Residues 336–355 form a disordered region; sequence NSAASDYEDNENEEMNNEEF. Residues 341–355 show a composition bias toward acidic residues; sequence DYEDNENEEMNNEEF.

The protein belongs to the RecA family.

The protein resides in the cytoplasm. Its function is as follows. Can catalyze the hydrolysis of ATP in the presence of single-stranded DNA, the ATP-dependent uptake of single-stranded DNA by duplex DNA, and the ATP-dependent hybridization of homologous single-stranded DNAs. It interacts with LexA causing its activation and leading to its autocatalytic cleavage. This Photorhabdus laumondii subsp. laumondii (strain DSM 15139 / CIP 105565 / TT01) (Photorhabdus luminescens subsp. laumondii) protein is Protein RecA.